The following is a 465-amino-acid chain: Branched-chain amino acid permease BcaP (465 aa).

The next 12 membrane-spanning stretches (helical) occupy residues 28 to 48 (FLAL…PGQV), 56 to 76 (GVVF…LAYA), 88 to 110 (AYSW…ALLA), 149 to 169 (DGGI…IIVF), 181 to 201 (ILVV…ITVI), 219 to 239 (FGGF…YIGF), 259 to 279 (GIIG…LVLV), 309 to 329 (VVTA…VLAG), 359 to 379 (VWTL…AFLA), 380 to 400 (QLIS…IYSL), 416 to 436 (PFYP…FWGL), and 438 to 458 (VQAK…YFAY).

Belongs to the amino acid-polyamine-organocation (APC) superfamily.

Its subcellular location is the cell membrane. In terms of biological role, branched-chain amino acid transport system that specifically transports branched-chain amino acids (BCAAs) (isoleucine, leucine and valine) and, to a lesser extent, methionine. Important for CodY-mediated regulation, and required for optimal growth in media containing free amino acids as the only amino acid source. The chain is Branched-chain amino acid permease BcaP from Lactococcus lactis subsp. cremoris (strain MG1363).